The following is a 3036-amino-acid chain: DmX-like protein 2 (3036 aa).

3 WD repeats span residues 108–145 (FLSS…ILEE), 167–207 (KTSV…KSSI), and 230–278 (AHPR…EDCL). A Phosphoserine modification is found at serine 326. The segment at 417 to 480 (KQVDHENDDA…EGSPRTYSRL (64 aa)) is disordered. Acidic residues predominate over residues 422 to 434 (ENDDADREDEEHS). Over residues 435-473 (QEDRERGLHMKLDHDLSLDRESEAGTGSSEHEDGEREGS) the composition is skewed to basic and acidic residues. Serine 473 carries the phosphoserine modification. Residues 492–532 (DRKIETLLTEWNKNPDMLFTIHPVDGTFLVWHVKYLDEYNP) form a WD 4 repeat. Position 588 is a phosphoserine (serine 588). 3 WD repeats span residues 595 to 634 (HSRS…KSAF), 751 to 803 (LHTS…RKLL), and 878 to 920 (QPSQ…VQAC). A disordered region spans residues 932-959 (SLLSVPGQKNVDSSPETSPSVSPMPHSS). Serine 944 and serine 945 each carry phosphoserine. Positions 949–959 (SPSVSPMPHSS) are enriched in low complexity. The stretch at 1000–1037 (LSSSSIYPVCLAPYLVVTTCSDNKVRFWKCCMEANPEC) is one WD 8 repeat. Serine 1140, serine 1143, and serine 1151 each carry phosphoserine. WD repeat units follow at residues 1163–1204 (PNIK…VTEQ) and 1244–1281 (GTPS…VKFG). Phosphoserine is present on residues serine 1287 and serine 1400. Threonine 1417 carries the post-translational modification Phosphothreonine. Serine 1857 bears the Phosphoserine mark. The segment covering 1927–1936 (ISHRMDDVPS) has biased composition (basic and acidic residues). Residues 1927 to 1952 (ISHRMDDVPSHSKALSDGNGSSGIEW) form a disordered region. Serine 1984 carries the post-translational modification Phosphoserine. Residues 1999 to 2033 (KSTDAREKDKQSDQKASDPNMLLTPQEEDDPEGDT) form a disordered region. A compositionally biased stretch (basic and acidic residues) spans 2001 to 2014 (TDAREKDKQSDQKA). Threonine 2022 is modified (phosphothreonine). Acidic residues predominate over residues 2024–2033 (QEEDDPEGDT). Positions 2122–2153 (GSYERHQIERRRLQAKREHAERRKSWLQKNQD) form a coiled coil. Phosphoserine occurs at positions 2399 and 2640. 6 WD repeats span residues 2761–2800 (RNLH…QLVC), 2804–2843 (AGNA…SNPK), 2850–2892 (CHSK…GNSL), 2898–2937 (CHDH…LIHT), 2940–2979 (AHDS…LIHS), and 2992–3030 (NIGA…NIPN).

Interacts with MADD and RAB3GAP.

Its subcellular location is the cytoplasmic vesicle. The protein localises to the secretory vesicle. It localises to the synaptic vesicle membrane. It is found in the neuronal dense core vesicle. In terms of biological role, may serve as a scaffold protein for MADD and RAB3GA on synaptic vesicles. Plays a role in the brain as a key controller of neuronal and endocrine homeostatic processes. The polypeptide is DmX-like protein 2 (DMXL2) (Homo sapiens (Human)).